A 110-amino-acid polypeptide reads, in one-letter code: Ig lambda-1 chain V region S178 (110 aa).

Positions 1-106 constitute an Ig-like domain; the sequence is QAVVTQESAL…RWVFGGGTKL (106 aa).

The protein is Ig lambda-1 chain V region S178 of Mus musculus (Mouse).